We begin with the raw amino-acid sequence, 589 residues long: Kelch-like protein diablo (589 aa).

The segment at 1–22 (MGDVLISDRPPSPARLSHTSEK) is disordered. The BTB domain occupies 41–108 (CDVVINVSGR…CYTSHIVVEE (68 aa)). The BACK domain occupies 143–245 (CLGIRAFADT…SPKFLVGTVG (103 aa)). Kelch repeat units lie at residues 292-338 (VLFA…VLND), 340-386 (LYAV…VLDG), 387-433 (FLYA…VLGG), 435-480 (LYAI…VFNN), 482-527 (IYAV…VVNG), and 528-574 (QLYA…VMRA).

It functions in the pathway protein modification; protein ubiquitination. Probable substrate-specific adapter of an E3 ubiquitin-protein ligase complex which mediates the ubiquitination and subsequent proteasomal degradation of target proteins. May have a role in synapse differentiation and growth. The polypeptide is Kelch-like protein diablo (Aedes aegypti (Yellowfever mosquito)).